The primary structure comprises 304 residues: Methionyl-tRNA formyltransferase (304 aa).

106-109 contributes to the (6S)-5,6,7,8-tetrahydrofolate binding site; the sequence is SLLP.

Belongs to the Fmt family.

The enzyme catalyses L-methionyl-tRNA(fMet) + (6R)-10-formyltetrahydrofolate = N-formyl-L-methionyl-tRNA(fMet) + (6S)-5,6,7,8-tetrahydrofolate + H(+). In terms of biological role, attaches a formyl group to the free amino group of methionyl-tRNA(fMet). The formyl group appears to play a dual role in the initiator identity of N-formylmethionyl-tRNA by promoting its recognition by IF2 and preventing the misappropriation of this tRNA by the elongation apparatus. The chain is Methionyl-tRNA formyltransferase from Thermosipho africanus (strain TCF52B).